The sequence spans 107 residues: Large ribosomal subunit protein uL24 (107 aa).

It belongs to the universal ribosomal protein uL24 family. As to quaternary structure, part of the 50S ribosomal subunit.

Its function is as follows. One of two assembly initiator proteins, it binds directly to the 5'-end of the 23S rRNA, where it nucleates assembly of the 50S subunit. One of the proteins that surrounds the polypeptide exit tunnel on the outside of the subunit. This chain is Large ribosomal subunit protein uL24, found in Nitrosomonas eutropha (strain DSM 101675 / C91 / Nm57).